The following is a 28-amino-acid chain: Conotoxin as14b (28 aa).

2 cysteine pairs are disulfide-bonded: Cys7/Cys27 and Cys11/Cys23.

The protein belongs to the conotoxin L superfamily. In terms of tissue distribution, expressed by the venom duct.

It is found in the secreted. In terms of biological role, in vivo, intracranial injection elicits scratching and grooming activity in mice, and causes body and rear limb extension and tail curling immediately upon injection. The chain is Conotoxin as14b from Conus cancellatus (Cancellate cone).